The following is a 460-amino-acid chain: Sorting nexin-4 (460 aa).

The segment covering Met1 to Trp16 has biased composition (polar residues). A disordered region spans residues Met1–Gly53. The 123-residue stretch at Lys56–Ala178 folds into the PX domain. 3 coiled-coil regions span residues Glu238 to Ile266, Arg306 to Asn337, and Gln374 to Met403.

It belongs to the sorting nexin family. Forms a complex with ATG20 and ATG17.

Its subcellular location is the cytoplasm. The protein localises to the membrane. It localises to the endosome membrane. Its function is as follows. Sorting nexin involved in the separation or division of vacuoles throughout the entire life cycle of the cells. Involved in retrieval of late-Golgi SNAREs from post-Golgi endosomes to the trans-Golgi network, for cytoplasm to vacuole transport (Cvt), and autophagy of large cargos including mitophagy, pexophagy and glycophagy. Autophagy is required for proper vegetative growth, asexual/sexual reproduction, and full virulence. Autophagy is particularly involved in the biosynthesis of deoxynivalenol (DON), an important virulence determinant. The sequence is that of Sorting nexin-4 from Gibberella zeae (strain ATCC MYA-4620 / CBS 123657 / FGSC 9075 / NRRL 31084 / PH-1) (Wheat head blight fungus).